We begin with the raw amino-acid sequence, 96 residues long: NADH-ubiquinone oxidoreductase chain 4L (96 aa).

Transmembrane regions (helical) follow at residues 1-21, 27-47, and 57-77; these read MPTTLIFTSFFLALLGLSLQR, LLLTLESMALALYVSTALWAL, and APLIILTFSACEAGMGLSLMI.

This sequence belongs to the complex I subunit 4L family.

It is found in the mitochondrion membrane. The enzyme catalyses a ubiquinone + NADH + 5 H(+)(in) = a ubiquinol + NAD(+) + 4 H(+)(out). Its function is as follows. Core subunit of the mitochondrial membrane respiratory chain NADH dehydrogenase (Complex I) which catalyzes electron transfer from NADH through the respiratory chain, using ubiquinone as an electron acceptor. Part of the enzyme membrane arm which is embedded in the lipid bilayer and involved in proton translocation. The polypeptide is NADH-ubiquinone oxidoreductase chain 4L (MT-ND4L) (Petromyzon marinus (Sea lamprey)).